We begin with the raw amino-acid sequence, 257 residues long: Mitochondrial distribution and morphology protein 12 (257 aa).

The SMP-LTD domain occupies 1–256; the sequence is MSFEINWEKL…WPSWVNLDFN (256 aa). The interval 74 to 98 is disordered; that stretch reads YEEDNETSSEMHGRDGQNVGESGEE.

The protein belongs to the MDM12 family. Component of the ER-mitochondria encounter structure (ERMES) or MDM complex, composed of MMM1, MDM10, MDM12 and MDM34. An MMM1 homodimer associates with one molecule of MDM12 on each side in a pairwise head-to-tail manner, and the SMP-LTD domains of MMM1 and MDM12 generate a continuous hydrophobic tunnel for phospholipid trafficking.

It localises to the mitochondrion outer membrane. It is found in the endoplasmic reticulum membrane. In terms of biological role, component of the ERMES/MDM complex, which serves as a molecular tether to connect the endoplasmic reticulum (ER) and mitochondria. Components of this complex are involved in the control of mitochondrial shape and protein biogenesis, and function in nonvesicular lipid trafficking between the ER and mitochondria. MDM12 is required for the interaction of the ER-resident membrane protein MMM1 and the outer mitochondrial membrane-resident beta-barrel protein MDM10. The MDM12-MMM1 subcomplex functions in the major beta-barrel assembly pathway that is responsible for biogenesis of all mitochondrial outer membrane beta-barrel proteins, and acts in a late step after the SAM complex. The MDM10-MDM12-MMM1 subcomplex further acts in the TOM40-specific pathway after the action of the MDM12-MMM1 complex. Essential for establishing and maintaining the structure of mitochondria and maintenance of mtDNA nucleoids. This is Mitochondrial distribution and morphology protein 12 from Candida glabrata (strain ATCC 2001 / BCRC 20586 / JCM 3761 / NBRC 0622 / NRRL Y-65 / CBS 138) (Yeast).